The following is a 495-amino-acid chain: Putative aldehyde dehydrogenase DhaS (495 aa).

An NAD(+)-binding site is contributed by 244-249 (GSTEIG). Residues E266 and C300 contribute to the active site.

The protein belongs to the aldehyde dehydrogenase family.

The enzyme catalyses an aldehyde + NAD(+) + H2O = a carboxylate + NADH + 2 H(+). The polypeptide is Putative aldehyde dehydrogenase DhaS (dhaS) (Bacillus subtilis (strain 168)).